Reading from the N-terminus, the 506-residue chain is Cytochrome P450 6a2 (506 aa).

Position 451 (C451) interacts with heme.

The protein belongs to the cytochrome P450 family. The cofactor is heme.

The protein localises to the endoplasmic reticulum membrane. Its subcellular location is the microsome membrane. In terms of biological role, is involved in the breakdown of synthetic insecticides and may be involved in the metabolism of insect hormones. The polypeptide is Cytochrome P450 6a2 (Cyp6a2) (Drosophila melanogaster (Fruit fly)).